A 369-amino-acid polypeptide reads, in one-letter code: Type 2 DNA topoisomerase 6 subunit A (369 aa).

One can recognise a Topo IIA-type catalytic domain in the interval 11-149; the sequence is KGDALAREKL…FHMRPEEDGA (139 aa). Tyrosine 106 acts as the O-(5'-phospho-DNA)-tyrosine intermediate in catalysis. Glutamate 202 and aspartate 254 together coordinate Mg(2+).

Belongs to the TOP6A family. In terms of assembly, homodimer. Heterotetramer of two Top6A and two Top6B chains. Requires Mg(2+) as cofactor.

It carries out the reaction ATP-dependent breakage, passage and rejoining of double-stranded DNA.. Its function is as follows. Relaxes both positive and negative superturns and exhibits a strong decatenase activity. The protein is Type 2 DNA topoisomerase 6 subunit A of Methanosarcina mazei (strain ATCC BAA-159 / DSM 3647 / Goe1 / Go1 / JCM 11833 / OCM 88) (Methanosarcina frisia).